Here is a 299-residue protein sequence, read N- to C-terminus: Cathepsin B-like CP3 (299 aa).

Residues 1 to 19 (MKLFLLAAAAFSAPALTVS) form the signal peptide. 3 cysteine pairs are disulfide-bonded: cysteine 87–cysteine 114, cysteine 97–cysteine 140, and cysteine 133–cysteine 176. The active site involves cysteine 100. Catalysis depends on residues histidine 244 and asparagine 265.

It belongs to the peptidase C1 family.

The protein localises to the vacuole. In terms of biological role, thiol protease which is required for parasite excystation and invasion of the proximal small intestine of the human host. The sequence is that of Cathepsin B-like CP3 (CP3) from Giardia intestinalis (Giardia lamblia).